Consider the following 620-residue polypeptide: Probable indole-3-acetic acid-amido synthetase GH3.7 (620 aa).

The protein belongs to the IAA-amido conjugating enzyme family. In terms of tissue distribution, ubiquitous.

Its function is as follows. May catalyze the synthesis of indole-3-acetic acid (IAA)-amino acid conjugates, providing a mechanism for the plant to cope with the presence of excess auxin. The protein is Probable indole-3-acetic acid-amido synthetase GH3.7 (GH3.7) of Oryza sativa subsp. japonica (Rice).